The primary structure comprises 328 residues: uncharacterized protein (328 aa).

S170 is subject to Phosphoserine.

It is found in the cytoplasm. The protein localises to the nucleus. This is an uncharacterized protein from Schizosaccharomyces pombe (strain 972 / ATCC 24843) (Fission yeast).